The primary structure comprises 305 residues: Ribonuclease BN (305 aa).

Residues histidine 64, histidine 66, aspartate 68, histidine 69, histidine 141, aspartate 212, and histidine 270 each coordinate Zn(2+). Residue aspartate 68 is the Proton acceptor of the active site.

Belongs to the RNase Z family. RNase BN subfamily. Homodimer. The cofactor is Zn(2+).

Its function is as follows. Zinc phosphodiesterase, which has both exoribonuclease and endoribonuclease activities. This chain is Ribonuclease BN, found in Escherichia coli O139:H28 (strain E24377A / ETEC).